A 218-amino-acid chain; its full sequence is Ras-related protein R-Ras (218 aa).

The tract at residues 1 to 30 (MSSGAASGTGRGRPRGGGPGPGDPPPSETH) is disordered. The segment covering 7–20 (SGTGRGRPRGGGPG) has biased composition (gly residues). 36–44 (GGGGVGKSA) provides a ligand contact to GTP. The short motif at 58–66 (YDPTIEDSY) is the Effector region element. Residues 83–87 (DTAGQ), 142–145 (NKAD), and 172–174 (SAK) each bind GTP. Cys-215 bears the Cysteine methyl ester mark. A lipid anchor (S-geranylgeranyl cysteine) is attached at Cys-215. The propeptide at 216–218 (VLL) is removed in mature form.

The protein belongs to the small GTPase superfamily. Ras family. As to quaternary structure, interacts with PLCE1. Interacts (active GTP-bound form preferentially) with RGS14. Interacts with OSBPL3. Interacts with ZDHHC19. In terms of processing, S-palmitoylated by ZDHHC19, leading to increased association with membranes and with rafts/caveolae as well as enhanced cell viability.

Its subcellular location is the cell membrane. It catalyses the reaction GTP + H2O = GDP + phosphate + H(+). Its function is as follows. GTP-binding protein with GTPase activity, likely involved in the regulation of MAPK signaling pathway and thereby controlling multiple cellular processes. Regulates the organization of the actin cytoskeleton. With OSPBL3, modulates integrin beta-1 (ITGB1) activity. This Homo sapiens (Human) protein is Ras-related protein R-Ras (RRAS).